The primary structure comprises 97 residues: Large ribosomal subunit protein uL23 (97 aa).

Belongs to the universal ribosomal protein uL23 family. In terms of assembly, part of the 50S ribosomal subunit. Contacts protein L29, and trigger factor when it is bound to the ribosome.

One of the early assembly proteins it binds 23S rRNA. One of the proteins that surrounds the polypeptide exit tunnel on the outside of the ribosome. Forms the main docking site for trigger factor binding to the ribosome. The protein is Large ribosomal subunit protein uL23 of Brachyspira hyodysenteriae (strain ATCC 49526 / WA1).